A 618-amino-acid chain; its full sequence is Keratin, type I cytoskeletal 9 (618 aa).

Residues 1-49 form a disordered region; that stretch reads MSFRQISSSFRSSSGSSCGGGGGRGASRGSMRSSFGRSSRAGGESRFGS. The head stretch occupies residues 1–137; it reads MSFRQISSSF…GGEGSILNTN (137 aa). Positions 7-16 are enriched in low complexity; that stretch reads SSSFRSSSGS. Residues S14 and S17 each carry the phosphoserine modification. Over residues 17 to 26 the composition is skewed to gly residues; it reads SCGGGGGRGA. Positions 27-49 are enriched in low complexity; sequence SRGSMRSSFGRSSRAGGESRFGS. The segment at 138–173 is coil 1A; it reads EKVVMQNLNSRLASYMDKVQELEEDNANLEKQIQEW. The region spanning 138–450 is the IF rod domain; it reads EKVVMQNLNS…KLLEGGQQDF (313 aa). Residues 174–192 form a linker 1 region; the sequence is YSRKGNRVFQKDYSHYYNT. The coil 1B stretch occupies residues 193-284; sequence IEDLKDRIVD…KSHKEEMNQL (92 aa). A linker 12 region spans residues 285–307; the sequence is TGLNDGDVNVEINVAPSTDLTQV. The interval 308-446 is coil 2; the sequence is LNDMREEYEH…ETYRKLLEGG (139 aa). Residues 447–609 are tail; that stretch reads QQDFESSGAG…GGGNTRPSQS (163 aa). The disordered stretch occupies residues 449-618; sequence DFESSGAGQI…SQSSQIPRLR (170 aa). The segment covering 456–603 has biased composition (gly residues); sequence GQIGFGSGKG…GSGGSYGGGN (148 aa). Over residues 607 to 618 the composition is skewed to low complexity; it reads SQSQSSQIPRLR.

The protein belongs to the intermediate filament family. As to quaternary structure, heterotetramer of two type I and two type II keratins. As to expression, expressed in the perinuclear ring of spermatid manchettes within testis and in keratinocytes of the suprabasal layer of footpad epidermis (at protein level).

In terms of biological role, may serve an important special function either in the mature palmar and plantar skin tissue or in the morphogenetic program of the formation of these tissues. Plays a role in keratin filament assembly. May be involved in spermatid nuclear shaping and sperm development. This is Keratin, type I cytoskeletal 9 (Krt9) from Rattus norvegicus (Rat).